The following is a 42-amino-acid chain: Photosystem I reaction center subunit IX (42 aa).

Residues 7-27 traverse the membrane as a helical segment; sequence YLSVAPVLSTLWFGALAGLLI.

This sequence belongs to the PsaJ family.

The protein localises to the plastid. The protein resides in the chloroplast thylakoid membrane. Functionally, may help in the organization of the PsaE and PsaF subunits. This is Photosystem I reaction center subunit IX from Guizotia abyssinica (Niger).